Here is a 475-residue protein sequence, read N- to C-terminus: Lipoprotein lipase (475 aa).

The N-terminal stretch at 1–27 (MESKALLLLALAVWLQSLTASRGGVAA) is a signal peptide. The segment at 32-53 (RDFIDIESKFALRTPEDTAEDT) is interaction with GPIHBP1. Cysteine 54 and cysteine 67 are joined by a disulfide. N-linked (GlcNAc...) asparagine glycosylation occurs at asparagine 70. Tyrosine 121 carries the 3'-nitrotyrosine modification. Residue serine 159 is the Nucleophile of the active site. The Charge relay system role is filled by aspartate 183. 3'-nitrotyrosine is present on tyrosine 191. Alanine 194, arginine 197, serine 199, and aspartate 202 together coordinate Ca(2+). Cysteine 243 and cysteine 266 form a disulfide bridge. Residues 243-266 (CNIGEAIRVIAERGLGDVDQLVKC) are essential for determining substrate specificity. The active-site Charge relay system is the histidine 268. Disulfide bonds link cysteine 291/cysteine 310 and cysteine 302/cysteine 305. Residues 341–464 (FHYQVKIHFS…KGKAPAVFVK (124 aa)) enclose the PLAT domain. Residue tyrosine 343 is modified to 3'-nitrotyrosine. Asparagine 386 carries N-linked (GlcNAc...) asparagine glycosylation. The tract at residues 417-421 (WSDWW) is important for interaction with lipoprotein particles. Residues 430–434 (KIRVK) are important for heparin binding. The interval 443–467 (IFCSREKVSHLQKGKAPAVFVKCHD) is interaction with GPIHBP1. A disulfide bond links cysteine 445 and cysteine 465.

It belongs to the AB hydrolase superfamily. Lipase family. In terms of assembly, homodimer. Interacts with GPIHBP1 with 1:1 stoichiometry. Interacts with APOC2; the interaction activates LPL activity in the presence of lipids. Interaction with heparan sulfate proteoglycans is required to protect LPL against loss of activity. Associates with lipoprotein particles in blood plasma. Interacts with LMF1 and SEL1L; interaction with SEL1L is required to prevent aggregation of newly synthesized LPL in the endoplasmic reticulum (ER), and for normal export of LPL from the ER to the extracellular space. Interacts with SORL1; SORL1 acts as a sorting receptor, promoting LPL localization to endosomes and later to lysosomes, leading to degradation of newly synthesized LPL. Post-translationally, tyrosine nitration after lipopolysaccharide (LPS) challenge down-regulates the lipase activity. In terms of tissue distribution, highest levels in the spinal cord.

Its subcellular location is the cell membrane. The protein resides in the secreted. It localises to the extracellular space. The protein localises to the extracellular matrix. It catalyses the reaction a triacylglycerol + H2O = a diacylglycerol + a fatty acid + H(+). The enzyme catalyses a 1,2-diacyl-sn-glycero-3-phosphocholine + H2O = a 2-acyl-sn-glycero-3-phosphocholine + a fatty acid + H(+). The catalysed reaction is 1,2,3-tri-(9Z-octadecenoyl)-glycerol + H2O = di-(9Z)-octadecenoylglycerol + (9Z)-octadecenoate + H(+). It carries out the reaction 1,2-di-(9Z-octadecenoyl)-sn-glycero-3-phosphocholine + H2O = (9Z-octadecenoyl)-sn-glycero-3-phosphocholine + (9Z)-octadecenoate + H(+). It catalyses the reaction 1,2,3-tributanoylglycerol + H2O = dibutanoylglycerol + butanoate + H(+). The enzyme catalyses 1,2-dihexadecanoyl-sn-glycero-3-phosphocholine + H2O = hexadecanoyl-sn-glycero-3-phosphocholine + hexadecanoate + H(+). With respect to regulation, the apolipoprotein APOC2 acts as a coactivator of LPL activity. Ca(2+) binding promotes protein stability and formation of the active homodimer. Interaction with GPIHBP1 protects LPL against inactivation by ANGPTL4. Its function is as follows. Key enzyme in triglyceride metabolism. Catalyzes the hydrolysis of triglycerides from circulating chylomicrons and very low density lipoproteins (VLDL), and thereby plays an important role in lipid clearance from the blood stream, lipid utilization and storage. Although it has both phospholipase and triglyceride lipase activities it is primarily a triglyceride lipase with low but detectable phospholipase activity. Mediates margination of triglyceride-rich lipoprotein particles in capillaries. Recruited to its site of action on the luminal surface of vascular endothelium by binding to GPIHBP1 and cell surface heparan sulfate proteoglycans. This is Lipoprotein lipase (LPL) from Papio anubis (Olive baboon).